The chain runs to 327 residues: NADPH-dependent aldose reductase GRE3 (327 aa).

The active-site Proton donor is the Tyr49. His111 is a substrate binding site. 219–286 contacts NADP(+); that stretch reads SSFGPQSFIE…SSKKERLLGN (68 aa).

This sequence belongs to the aldo/keto reductase family. Monomer.

It localises to the cytoplasm. Its subcellular location is the nucleus. It carries out the reaction an alditol + NAD(+) = an aldose + NADH + H(+). The enzyme catalyses an alditol + NADP(+) = an aldose + NADPH + H(+). Its function is as follows. Aldose reductase with a broad substrate specificity. Reduces the cytotoxic compound methylglyoxal (MG) to acetol and (R)-lactaldehyde under stress conditions. MG is synthesized via a bypath of glycolysis from dihydroxyacetone phosphate and is believed to play a role in cell cycle regulation and stress adaptation. In pentose-fermenting yeasts, aldose reductase catalyzes the reduction of xylose into xylitol. The purified enzyme catalyzes this reaction, but the inability of S.cerevisiae to grow on xylose as sole carbon source indicates that the physiological function is more likely methylglyoxal reduction. The protein is NADPH-dependent aldose reductase GRE3 of Saccharomyces cerevisiae (strain ATCC 204508 / S288c) (Baker's yeast).